Consider the following 499-residue polypeptide: Cytochrome P450 77A1 (499 aa).

Cys443 lines the heme pocket.

This sequence belongs to the cytochrome P450 family. The cofactor is heme.

This Solanum melongena (Eggplant) protein is Cytochrome P450 77A1 (CYP77A1).